We begin with the raw amino-acid sequence, 666 residues long: NADH-ubiquinone oxidoreductase chain 5 (666 aa).

17 consecutive transmembrane segments (helical) span residues 3-23 (LLIL…GRWL), 31-51 (FSTL…FEIG), 59-78 (IFLV…GFLF), 82-101 (TVTM…IYSI), 119-139 (IFTF…MFLG), 168-190 (LIVN…WVFN), 211-231 (FLGF…IGAI), 251-271 (TPVS…FLMI), 283-303 (ILFI…VTGV), 311-333 (VIAY…SCYD), 337-357 (FHLA…GSVI), 375-395 (FMPL…GFPF), 421-441 (YISF…FYSF), 467-487 (LLMI…GYLI), 524-544 (WLPF…QIFL), 572-594 (VLYN…FKIL), and 629-649 (YLFF…YSYI).

It belongs to the complex I subunit 5 family.

It localises to the mitochondrion inner membrane. The enzyme catalyses a ubiquinone + NADH + 5 H(+)(in) = a ubiquinol + NAD(+) + 4 H(+)(out). Functionally, core subunit of the mitochondrial membrane respiratory chain NADH dehydrogenase (Complex I) that is believed to belong to the minimal assembly required for catalysis. Complex I functions in the transfer of electrons from NADH to the respiratory chain. The immediate electron acceptor for the enzyme is believed to be ubiquinone. The chain is NADH-ubiquinone oxidoreductase chain 5 (ND5) from Chondrus crispus (Carrageen Irish moss).